We begin with the raw amino-acid sequence, 388 residues long: 5-hydroxytryptamine receptor 4 (388 aa).

Topologically, residues 1 to 19 (MDKLDANVSSEEGFGSVEK) are extracellular. N7 is a glycosylation site (N-linked (GlcNAc...) asparagine). A helical transmembrane segment spans residues 20 to 44 (VVLLTFLSTVILMAILGNLLVMVAV). Residues 45 to 54 (CWDRQLRKIK) are Cytoplasmic-facing. The chain crosses the membrane as a helical span at residues 55–78 (TNYFIVSLAFADLLVSVLVMPFGA). Topologically, residues 79 to 92 (IELVQDIWIYGEVF) are extracellular. A helical membrane pass occupies residues 93 to 117 (CLVRTSLDVLLTTASIFHLCCISLD). C93 and C184 are oxidised to a cystine. D100 provides a ligand contact to serotonin. Residues 118–133 (RYYAICCQPLVYRNKM) lie on the Cytoplasmic side of the membrane. The chain crosses the membrane as a helical span at residues 134–157 (TPLRIALMLGGCWVIPTFISFLPI). Residues 158–188 (MQGWNNIGIIDLIEKRKFNQNSNSTYCVFMV) lie on the Extracellular side of the membrane. The helical transmembrane segment at 189-212 (NKPYAITCSVVAFYIPFLLMVLAY) threads the bilayer. At 213-257 (YRIYVTAKEHAHQIQMLQRAGASSESRPQSADQHSTHRMRTETKA) the chain is on the cytoplasmic side. A helical transmembrane segment spans residues 258 to 283 (AKTLCIIMGCFCLCWAPFFVTNIVDP). Residue N279 coordinates serotonin. The Extracellular portion of the chain corresponds to 284–290 (FIDYTVP). A helical transmembrane segment spans residues 291–314 (GQVWTAFLWLGYINSGLNPFLYAF). At 315-388 (LNKSFRRAFL…PLVAAQPSDT (74 aa)) the chain is on the cytoplasmic side.

This sequence belongs to the G-protein coupled receptor 1 family. In terms of assembly, interacts (via C-terminus 330-346 AA) with GRK5; this interaction is promoted by 5-HT (serotonin). As to quaternary structure, interacts with MAGI2, MPP3, NHERF1 and SNX27 isoforms 1 and 2. Forms a complex including NHERF1 and EZR. Interacts with PATJ, NOS1 and SEC23A. In terms of tissue distribution, expressed in ileum, brain, and atrium, but not in the ventricle. As to expression, mainly expressed in atria and cardiac ventricle. Expressed in all cardiovascular tissues analyzed.

The protein resides in the cell membrane. The protein localises to the endosome membrane. Functionally, G-protein coupled receptor for 5-hydroxytryptamine (serotonin), a biogenic hormone that functions as a neurotransmitter, a hormone and a mitogen. Ligand binding causes a conformation change that triggers signaling via guanine nucleotide-binding proteins (G proteins) and modulates the activity of downstream effectors. HTR4 is coupled to G(s) G alpha proteins and mediates activation of adenylate cyclase activity. In Homo sapiens (Human), this protein is 5-hydroxytryptamine receptor 4.